The sequence spans 1459 residues: ARF guanine-nucleotide exchange factor 2 (1459 aa).

A phosphoserine mark is found at Ser46 and Ser284. The SEC7 domain maps to 570–714 (FNEKPKKGIP…IIMLNTDLHN (145 aa)). A disordered region spans residues 1412 to 1459 (EKGNGSSSHGSAHEQTPESNDVEIEATAPIDDNTDDDNKPKLSDVEKD). A compositionally biased stretch (basic and acidic residues) spans 1447 to 1459 (DDNKPKLSDVEKD).

In terms of assembly, interacts (via SEC7 domain) with DRS2 (via C-terminus); the interaction is direct. Interacts with GMH1.

It localises to the cytoplasm. The protein localises to the cytosol. Its subcellular location is the membrane. The protein resides in the golgi apparatus membrane. Functionally, activates the ARF proteins by exchanging bound GDP for free GTP. Plays a role in maintaining mitochondrial morphology. Stimulates DRS2 flippase activity. The sequence is that of ARF guanine-nucleotide exchange factor 2 (GEA2) from Saccharomyces cerevisiae (strain ATCC 204508 / S288c) (Baker's yeast).